A 200-amino-acid polypeptide reads, in one-letter code: Vacuolar iron transporter homolog 3 (200 aa).

Residues 1 to 31 (MESHNTLNLDMEKDQEKAFDYSKRAQWLRAA) lie on the Cytoplasmic side of the membrane. Residues 32 to 52 (VLGANDGLVSTASLMMGVGAV) form a helical membrane-spanning segment. Topologically, residues 53–59 (KQNVKIM) are vacuolar. The chain crosses the membrane as a helical span at residues 60 to 80 (ILTGFAGLVAGACSMAIGEFV). The Cytoplasmic portion of the chain corresponds to 81–113 (SVYSQYDIEVAQMKRETGGEIEKEKLPSPTQAA). The helical transmembrane segment at 114-134 (AASALAFSLGAMVPLLAAAFV) threads the bilayer. Residues 135-140 (KEYKVR) are Vacuolar-facing. Residues 141–161 (IGAIVAAVTLALVMFGWLGAV) form a helical membrane-spanning segment. The Cytoplasmic portion of the chain corresponds to 162–173 (LGKAPVVKSSLR). A helical transmembrane segment spans residues 174 to 194 (VLVGGWLAMAITYGFTKLIGS). Residues 195–200 (HSHMYV) lie on the Vacuolar side of the membrane.

It belongs to the CCC1 family.

The protein localises to the vacuole membrane. The catalysed reaction is Fe(2+)(in) = Fe(2+)(out). Functionally, probable vacuolar iron transporter that may be involved in the regulation of iron distribution throughout the plant. The chain is Vacuolar iron transporter homolog 3 from Arabidopsis thaliana (Mouse-ear cress).